Consider the following 232-residue polypeptide: dITP/XTP pyrophosphatase (232 aa).

10-15 (TRNKGK) serves as a coordination point for substrate. Aspartate 72 functions as the Proton acceptor in the catalytic mechanism. Aspartate 72 is a binding site for Mg(2+). Substrate contacts are provided by residues serine 73, 153–156 (FGYD), lysine 176, and 181–182 (HR).

Belongs to the HAM1 NTPase family. Homodimer. Mg(2+) is required as a cofactor.

The catalysed reaction is XTP + H2O = XMP + diphosphate + H(+). It catalyses the reaction dITP + H2O = dIMP + diphosphate + H(+). The enzyme catalyses ITP + H2O = IMP + diphosphate + H(+). Pyrophosphatase that catalyzes the hydrolysis of nucleoside triphosphates to their monophosphate derivatives, with a high preference for the non-canonical purine nucleotides XTP (xanthosine triphosphate), dITP (deoxyinosine triphosphate) and ITP. Seems to function as a house-cleaning enzyme that removes non-canonical purine nucleotides from the nucleotide pool, thus preventing their incorporation into DNA/RNA and avoiding chromosomal lesions. The chain is dITP/XTP pyrophosphatase from Syntrophobacter fumaroxidans (strain DSM 10017 / MPOB).